The sequence spans 301 residues: MAEITLEPSDLMAQTNKRIVPKFTEIFPVEDANYPYSAFIASVRKDVIKHCTDHKGIFQPVLPPEKKVPELWFYTELKTRTSSITLAIRMDNLYLVGFRTPGGVWWEFGKDGDTHLLGDNPRWLGFGGRYQDLIGNKGLETVTMGRAEMTRAVNDLAKKKKMATLEEEEVKMQMQMPEAADLAAAAAADPQADTKSKLVKLVVMVCEGLRFNTVSRTVDAGFNSQHGVTLTVTQGKQVQKWDRISKAAFEWADHPTAVIPDMQKLGIKDKNEAARIVALVKNQTTAAAATAASADNDDDEA.

Residues 1–16 constitute a propeptide, or 12 (in 10% of the molecules); sequence MAEITLEPSDLMAQTN. The propeptide occupies 162-186; the sequence is MATLEEEEVKMQMQMPEAADLAAAA. The active site involves E207. Positions 258-301 are excised as a propeptide; sequence VIPDMQKLGIKDKNEAARIVALVKNQTTAAAATAASADNDDDEA.

This sequence belongs to the ribosome-inactivating protein family. Type 1 RIP subfamily. Synthesized and stored in the kernel as a 34 kDa inactive precursor. During germination, this neutral precursor is converted into a basic, active form by limited proteolysis, which removes 25 AA of net charge -6 from the center of the polypeptide chain. Additional processing also occurs at the N- and C-termini of the polypeptide. A two-chain active RIP (comprised of 16.5 and 8.5 kDa fragments that remain tightly associated) is produced from this processing event.

It catalyses the reaction Endohydrolysis of the N-glycosidic bond at one specific adenosine on the 28S rRNA.. Its function is as follows. Potent catalytic inactivator of eukaryotic protein synthesis. It may be a component of natural defense mechanisms involved in protecting the kernel against soil-borne fungal infections. The protein is Ribosome-inactivating protein of Zea mays (Maize).